Here is a 231-residue protein sequence, read N- to C-terminus: MSTSKNEYYDMTRGQKTCFVFSNSTYRSKKDEITLRKTFIEAGYKVRVIKDTNLIKTTNILSEFSEFAKKKKVCAVIVFILSHGVVNGEVYVGSDRCNLNYMVNAMDTEILRGVPKMLFVQINKEYRSVYENFKDVIVKFMSNTNLATLPDTTVVSIEDPCPAHAEYKPASPDVPLDFYYRESWYTNQSKDVTRVGSPMIQELCKLLRIDAEFCEIMALLDKKLEKFHIEP.

It belongs to the peptidase C14A family.

This Trichoplusia ni ascovirus 2c (TnAV-2c) protein is Caspase-like protein.